The primary structure comprises 273 residues: MALKNFNPITPSLRELVQVDKTSLWKGRPLKSLTKGISKTGGRNNQGRITSWHRGGGHKKLYRIIDFKRNKIDISAIVERIEYDPNRTAFIALIKYEDGEYSYILAPQKLSVGDRVISSQDADIKIGNCLPLKCIPIGTTLHNVEMKVGKGGQIARSAGTSVDLVGKDSGYAQIKLRSGEFRLVPLDCKATIGSISNPDQKNINLGKAGRNRWLGWRPHVRGVAMNPVDHPHGGGEGKTSGGRHPVTPWGFPTKGKKTRKNKRTSKFIVKKRK.

Positions 228 to 273 are disordered; the sequence is VDHPHGGGEGKTSGGRHPVTPWGFPTKGKKTRKNKRTSKFIVKKRK. The span at 254–273 shows a compositional bias: basic residues; it reads KGKKTRKNKRTSKFIVKKRK.

This sequence belongs to the universal ribosomal protein uL2 family. In terms of assembly, part of the 50S ribosomal subunit. Forms a bridge to the 30S subunit in the 70S ribosome.

Its function is as follows. One of the primary rRNA binding proteins. Required for association of the 30S and 50S subunits to form the 70S ribosome, for tRNA binding and peptide bond formation. It has been suggested to have peptidyltransferase activity; this is somewhat controversial. Makes several contacts with the 16S rRNA in the 70S ribosome. The protein is Large ribosomal subunit protein uL2 of Rickettsia africae (strain ESF-5).